Here is a 98-residue protein sequence, read N- to C-terminus: MRGAAPRVADLNLELNDLVLPINLLSEEVLQPSDDESEAPEEELFPFRIDTCCYRCEVNVRITLFAVEFGLRALEQLIVDGKLTFCCTTCARTLRNGR.

The tract at residues 1–42 (MRGAAPRVADLNLELNDLVLPINLLSEEVLQPSDDESEAPEE) is E7 terminal domain. Residues 53-90 (CYRCEVNVRITLFAVEFGLRALEQLIVDGKLTFCCTTC) fold into a zinc finger. Residues 71–79 (LRALEQLIV) carry the Nuclear export signal motif.

It belongs to the papillomaviridae E7 protein family. Homodimer. Homooligomer. Interacts with host RB1; this interaction induces dissociation of RB1-E2F1 complex thereby disrupting RB1 activity. Interacts with host EP300; this interaction represses EP300 transcriptional activity. Interacts with protein E2; this interaction inhibits E7 oncogenic activity. Interacts with host TMEM173/STING; this interaction impairs the ability of TMEM173/STING to sense cytosolic DNA and promote the production of type I interferon (IFN-alpha and IFN-beta). In terms of processing, highly phosphorylated.

The protein localises to the host cytoplasm. It is found in the host nucleus. Functionally, plays a role in viral genome replication by driving entry of quiescent cells into the cell cycle. Stimulation of progression from G1 to S phase allows the virus to efficiently use the cellular DNA replicating machinery to achieve viral genome replication. E7 protein has both transforming and trans-activating activities. Induces the disassembly of the E2F1 transcription factor from RB1, with subsequent transcriptional activation of E2F1-regulated S-phase genes. Interferes with host histone deacetylation mediated by HDAC1 and HDAC2, leading to transcription activation. Also plays a role in the inhibition of both antiviral and antiproliferative functions of host interferon alpha. Interaction with host TMEM173/STING impairs the ability of TMEM173/STING to sense cytosolic DNA and promote the production of type I interferon (IFN-alpha and IFN-beta). In Human papillomavirus 65, this protein is Protein E7.